Here is a 164-residue protein sequence, read N- to C-terminus: Kunitz-type proteinase inhibitor BbCI (164 aa).

Belongs to the protease inhibitor I3 (leguminous Kunitz-type inhibitor) family.

The protein localises to the secreted. Functionally, inhibits T.cruzi cruzipain. The sequence is that of Kunitz-type proteinase inhibitor BbCI from Bauhinia bauhinioides (Perlebia bauhinoides).